A 20-amino-acid chain; its full sequence is Trypsin inhibitor (20 aa).

A disordered region spans residues 1–20 (APSDTTIAETLTITEEFFPD).

In terms of tissue distribution, hemolymph.

The protein localises to the secreted. It localises to the extracellular space. Functionally, inhibits trypsin stoichiometrically. Also inhibits chymotrypsin very weakly. The protein is Trypsin inhibitor of Mythimna unipuncta (Armyworm moth).